A 489-amino-acid polypeptide reads, in one-letter code: Mitochondrial-processing peptidase subunit beta (489 aa).

A mitochondrion-targeting transit peptide spans 1 to 45; that stretch reads MAAAAARVVLLPAARRRLWGFSESLLIRGAAGRSSYFGENRLRST. His-101 serves as a coordination point for Zn(2+). The active-site Proton acceptor is Glu-104. The Zn(2+) site is built by His-105 and Glu-181.

It belongs to the peptidase M16 family. As to quaternary structure, heterodimer of PMPCA (alpha) and PMPCB (beta) subunits, forming the mitochondrial processing protease (MPP) in which PMPCA is involved in substrate recognition and binding and PMPCB is the catalytic subunit. Zn(2+) is required as a cofactor.

The protein resides in the mitochondrion matrix. It catalyses the reaction Release of N-terminal transit peptides from precursor proteins imported into the mitochondrion, typically with Arg in position P2.. Its activity is regulated as follows. Binding to PMPCA is required for catalytic activity. Catalytic subunit of the essential mitochondrial processing protease (MPP), which cleaves the mitochondrial sequence off newly imported precursors proteins. Preferentially, cleaves after an arginine at position P2. Required for PINK1 turnover by coupling PINK1 mitochondrial import and cleavage, which results in subsequent PINK1 proteolysis. In Pongo abelii (Sumatran orangutan), this protein is Mitochondrial-processing peptidase subunit beta (PMPCB).